The following is a 350-amino-acid chain: Atypical chemokine receptor 4 (350 aa).

Residues 1–41 (MAVEYNQSTDYYYEENEMNDTHDYSQYEVICIKEEVRKFAK) lie on the Extracellular side of the membrane. N-linked (GlcNAc...) asparagine glycans are attached at residues Asn6 and Asn19. Residues 42-66 (VFLPAFFTIAFIIGLAGNSTVVAIY) traverse the membrane as a helical segment. Residues 67–79 (AYYKKRRTKTDVY) lie on the Cytoplasmic side of the membrane. The helical transmembrane segment at 80–99 (ILNLAVADLFLLFTLPFWAV) threads the bilayer. Topologically, residues 100-113 (NAVHGWVLGKIMCK) are extracellular. Residues Cys112 and Cys184 are joined by a disulfide bond. The chain crosses the membrane as a helical span at residues 114-135 (VTSALYTVNFVSGMQFLACIST). The Cytoplasmic portion of the chain corresponds to 136-153 (DRYWAVTKAPSQSGVGKP). The chain crosses the membrane as a helical span at residues 154-175 (CWVICFCVWVAAILLSIPQLVF). Topologically, residues 176–199 (YTVNHKARCVPIFPYHLGTSMKAS) are extracellular. The helical transmembrane segment at 200–222 (IQILEICIGFIIPFLIMAVCYFI) threads the bilayer. Topologically, residues 223–241 (TAKTLIKMPNIKKSQPLKV) are cytoplasmic. The helical transmembrane segment at 242–265 (LFTVVIVFIVTQLPYNIVKFCQAI) threads the bilayer. At 266-283 (DIIYSLITDCDMSKRMDV) the chain is on the extracellular side. The chain crosses the membrane as a helical span at residues 284–306 (AIQITESIALFHSCLNPVLYVFM). Topologically, residues 307-350 (GTSFKNYIMKVAKKYGSWRRQRQNVEEIPFESEDATEPTSTFSI) are cytoplasmic.

This sequence belongs to the G-protein coupled receptor 1 family. Atypical chemokine receptor subfamily. As to quaternary structure, forms heteromers with CXCR3. Interacts with ARRB1 and ARRB2. Post-translationally, the Ser/Thr residues in the C-terminal cytoplasmic tail may be phosphorylated. As to expression, expressed in circumvallate and fungiform papillae, olfactory epithelium and lung. Lower expression in liver, kidney and tongue epithelium bearing no taste papillae. Very low expression in the cerebral cortex of the brain.

It is found in the early endosome. Its subcellular location is the recycling endosome. The protein localises to the cell membrane. Functionally, atypical chemokine receptor that controls chemokine levels and localization via high-affinity chemokine binding that is uncoupled from classic ligand-driven signal transduction cascades, resulting instead in chemokine sequestration, degradation, or transcytosis. Also known as interceptor (internalizing receptor) or chemokine-scavenging receptor or chemokine decoy receptor. Acts as a receptor for chemokines CCL2, CCL8, CCL13, CCL19, CCL21 and CCL25. Chemokine-binding does not activate G-protein-mediated signal transduction but instead induces beta-arrestin recruitment, leading to ligand internalization. Plays an important role in controlling the migration of immune and cancer cells that express chemokine receptors CCR7 and CCR9, by reducing the availability of CCL19, CCL21, and CCL25 through internalization. Negatively regulates CXCR3-induced chemotaxis. Regulates T-cell development in the thymus. In Bos taurus (Bovine), this protein is Atypical chemokine receptor 4 (ACKR4).